Consider the following 66-residue polypeptide: Large ribosomal subunit protein bL33 (66 aa).

Belongs to the bacterial ribosomal protein bL33 family.

The protein is Large ribosomal subunit protein bL33 of Wolbachia pipientis wMel.